The primary structure comprises 306 residues: Acetyl-coenzyme A carboxylase carboxyl transferase subunit beta (306 aa).

A CoA carboxyltransferase N-terminal domain is found at Leu-25–Thr-294. The disordered stretch occupies residues Phe-286–Ala-306. Residues Pro-288 to Ala-306 are compositionally biased toward low complexity.

The protein belongs to the AccD/PCCB family. As to quaternary structure, acetyl-CoA carboxylase is a heterohexamer composed of biotin carboxyl carrier protein (AccB), biotin carboxylase (AccC) and two subunits each of ACCase subunit alpha (AccA) and ACCase subunit beta (AccD).

It localises to the cytoplasm. The enzyme catalyses N(6)-carboxybiotinyl-L-lysyl-[protein] + acetyl-CoA = N(6)-biotinyl-L-lysyl-[protein] + malonyl-CoA. Its pathway is lipid metabolism; malonyl-CoA biosynthesis; malonyl-CoA from acetyl-CoA: step 1/1. Functionally, component of the acetyl coenzyme A carboxylase (ACC) complex. Biotin carboxylase (BC) catalyzes the carboxylation of biotin on its carrier protein (BCCP) and then the CO(2) group is transferred by the transcarboxylase to acetyl-CoA to form malonyl-CoA. The chain is Acetyl-coenzyme A carboxylase carboxyl transferase subunit beta from Bartonella grahamii (strain as4aup).